The primary structure comprises 234 residues: Octanoyltransferase (234 aa).

The 185-residue stretch at 50 to 234 (GEAPELVWLL…AFEQVFGPTR (185 aa)) folds into the BPL/LPL catalytic domain. Substrate is bound by residues 88–95 (RGGQITYH), 163–165 (AIG), and 176–178 (GIA). Catalysis depends on cysteine 194, which acts as the Acyl-thioester intermediate.

The protein belongs to the LipB family.

The protein localises to the cytoplasm. It carries out the reaction octanoyl-[ACP] + L-lysyl-[protein] = N(6)-octanoyl-L-lysyl-[protein] + holo-[ACP] + H(+). Its pathway is protein modification; protein lipoylation via endogenous pathway; protein N(6)-(lipoyl)lysine from octanoyl-[acyl-carrier-protein]: step 1/2. Its function is as follows. Catalyzes the transfer of endogenously produced octanoic acid from octanoyl-acyl-carrier-protein onto the lipoyl domains of lipoate-dependent enzymes. Lipoyl-ACP can also act as a substrate although octanoyl-ACP is likely to be the physiological substrate. In Rhodopseudomonas palustris (strain BisA53), this protein is Octanoyltransferase.